The sequence spans 251 residues: Aspartate/glutamate leucyltransferase (251 aa).

This sequence belongs to the R-transferase family. Bpt subfamily.

The protein resides in the cytoplasm. It carries out the reaction N-terminal L-glutamyl-[protein] + L-leucyl-tRNA(Leu) = N-terminal L-leucyl-L-glutamyl-[protein] + tRNA(Leu) + H(+). The catalysed reaction is N-terminal L-aspartyl-[protein] + L-leucyl-tRNA(Leu) = N-terminal L-leucyl-L-aspartyl-[protein] + tRNA(Leu) + H(+). Functionally, functions in the N-end rule pathway of protein degradation where it conjugates Leu from its aminoacyl-tRNA to the N-termini of proteins containing an N-terminal aspartate or glutamate. In Xanthomonas axonopodis pv. citri (strain 306), this protein is Aspartate/glutamate leucyltransferase.